The chain runs to 859 residues: DNA-directed RNA polymerase subunit Rpo1C (859 aa).

This sequence belongs to the RNA polymerase beta' chain family. As to quaternary structure, part of the RNA polymerase complex. This protein undergoes a protein self splicing that involves a post-translational excision of the intervening region (intein) followed by peptide ligation.

It localises to the cytoplasm. The enzyme catalyses RNA(n) + a ribonucleoside 5'-triphosphate = RNA(n+1) + diphosphate. DNA-dependent RNA polymerase (RNAP) catalyzes the transcription of DNA into RNA using the four ribonucleoside triphosphates as substrates. Forms part of the jaw domain. This is DNA-directed RNA polymerase subunit Rpo1C from Methanocaldococcus jannaschii (strain ATCC 43067 / DSM 2661 / JAL-1 / JCM 10045 / NBRC 100440) (Methanococcus jannaschii).